The primary structure comprises 486 residues: Membrane-bound lytic murein transglycosylase F (486 aa).

The N-terminal stretch at 1–21 (MTRIKLSYFTIGLVALLLALA) is a signal peptide. Residues 22–268 (LWPNIPWRNG…RLEEKYLGHV (247 aa)) form a non-LT domain region. The segment at 269–486 (GSFDYVDTKT…VVGPGWSIGD (218 aa)) is LT domain. Residue Glu-313 is part of the active site.

The protein in the N-terminal section; belongs to the bacterial solute-binding protein 3 family. In the C-terminal section; belongs to the transglycosylase Slt family.

Its subcellular location is the cell outer membrane. The catalysed reaction is Exolytic cleavage of the (1-&gt;4)-beta-glycosidic linkage between N-acetylmuramic acid (MurNAc) and N-acetylglucosamine (GlcNAc) residues in peptidoglycan, from either the reducing or the non-reducing ends of the peptidoglycan chains, with concomitant formation of a 1,6-anhydrobond in the MurNAc residue.. Functionally, murein-degrading enzyme that degrades murein glycan strands and insoluble, high-molecular weight murein sacculi, with the concomitant formation of a 1,6-anhydromuramoyl product. Lytic transglycosylases (LTs) play an integral role in the metabolism of the peptidoglycan (PG) sacculus. Their lytic action creates space within the PG sacculus to allow for its expansion as well as for the insertion of various structures such as secretion systems and flagella. In Yersinia pseudotuberculosis serotype I (strain IP32953), this protein is Membrane-bound lytic murein transglycosylase F.